The primary structure comprises 721 residues: Zinc-transporting ATPase (721 aa).

The Cytoplasmic segment spans residues 1 to 107; that stretch reads MTQSSPLKTQ…HSHGAGEFNL (107 aa). Residues 8–74 enclose the HMA domain; it reads KTQQMQVGGM…RIAALGYTLA (67 aa). Zn(2+) contacts are provided by cysteine 19 and cysteine 22. The interval 80–101 is disordered; the sequence is VTLNGHKHPHSHREEGHSHSHG. Residues 108-128 traverse the membrane as a helical segment; that stretch reads KQELLPVLTAIALFTIAILFE. Topologically, residues 129 to 140 are extracellular; that stretch reads QPLHNTPGQIAE. A helical transmembrane segment spans residues 141–160; that stretch reads FAVIIPAYLLSGWTVLKTAG. The Cytoplasmic portion of the chain corresponds to 161–167; that stretch reads RNILRGQ. The helical transmembrane segment at 168 to 187 threads the bilayer; the sequence is IFDENFLMTIATLGALAIHQ. The Extracellular portion of the chain corresponds to 188 to 190; it reads LPE. A helical transmembrane segment spans residues 191-210; it reads AVAVMLFFRVGELFQEYSVG. The Cytoplasmic portion of the chain corresponds to 211 to 344; sequence RSRRSIKALL…ITQFARYYTP (134 aa). A helical membrane pass occupies residues 345-363; it reads VIVFLSLAVALLPPLFIPG. Topologically, residues 364–369 are extracellular; sequence ADRADW. The chain crosses the membrane as a helical span at residues 370-387; that stretch reads VYRALVLLVISCPCGLVI. Over 388–671 the chain is Cytoplasmic; the sequence is SIPLGYFGGI…AIHVARKTRQ (284 aa). Residue aspartate 425 is the 4-aspartylphosphate intermediate of the active site. Mg(2+) is bound by residues aspartate 618 and aspartate 622. A helical transmembrane segment spans residues 672-693; the sequence is IVVQNIVLALGIKALFIALGTI. At 694–701 the chain is on the extracellular side; it reads GLATLWEA. Residues 702–717 traverse the membrane as a helical segment; the sequence is VFADVGVALLAILNAT. The Cytoplasmic segment spans residues 718–721; that stretch reads RIAK.

It belongs to the cation transport ATPase (P-type) (TC 3.A.3) family. Type IB subfamily.

The protein localises to the cell membrane. It catalyses the reaction Zn(2+)(in) + ATP + H2O = Zn(2+)(out) + ADP + phosphate + H(+). This chain is Zinc-transporting ATPase (ziaA), found in Synechocystis sp. (strain ATCC 27184 / PCC 6803 / Kazusa).